A 320-amino-acid chain; its full sequence is Ino eighty subunit 2 (320 aa).

Composition is skewed to acidic residues over residues 1 to 12 (MDSEASDIEAEL) and 22 to 35 (EYID…DIDD). 2 disordered regions span residues 1-232 (MDSE…SKKK) and 244-306 (ENAR…EGMT). Positions 42 to 59 (SSRRTARRSVPKGVRTSK) are enriched in basic residues. Serine 67 is subject to Phosphoserine. Over residues 68-80 (VEVDEDYDEEEDV) the composition is skewed to acidic residues. Residues 105–116 (EKSDIGDSKGND) are compositionally biased toward basic and acidic residues. A compositionally biased stretch (acidic residues) spans 117 to 130 (GEIEDGILEEEESL). At serine 129 the chain carries Phosphoserine. Positions 131-147 (EKELNRGGGKEVEKSEE) are enriched in basic and acidic residues. The span at 161-174 (EEQDGESGGYEDNE) shows a compositional bias: acidic residues. The span at 207-217 (TDSTRSTTTRS) shows a compositional bias: low complexity. The segment covering 244-264 (ENARKRKNLSEKRLEEEKQDT) has biased composition (basic and acidic residues). Residues 268–278 (LLKKRAGKSRS) are compositionally biased toward basic residues.

It belongs to the IES2 family. In terms of assembly, component of the chromatin-remodeling INO80 complex, at least composed of ARP4, ARP5, ARP8, RVB1, RVB2, TAF14, NHP10, IES1, IES3, IES4, IES6, ACT1, IES2, IES5 and INO80.

It is found in the nucleus. In terms of biological role, component of the INO80 complex which remodels chromatin by shifting nucleosomes and is involved in DNA repair. This Saccharomyces cerevisiae (strain ATCC 204508 / S288c) (Baker's yeast) protein is Ino eighty subunit 2 (IES2).